Here is a 218-residue protein sequence, read N- to C-terminus: TPA-induced transmembrane protein homolog (218 aa).

The segment at 1-54 (MEEGSRSQSPREELELSMLDGPQEELTPLNNDLRIQPNSAEDPSPAQVGKESPW) is disordered. Residues 66 to 86 (KLWMVIVTIFLCFIIVIVISL) form a helical membrane-spanning segment.

It localises to the endoplasmic reticulum membrane. The sequence is that of TPA-induced transmembrane protein homolog from Mus musculus (Mouse).